The chain runs to 176 residues: MSSNQQPVVLGKLGSCHGIKGWLKITAYTDSVEGIFDYSPWLIKENGEWREVKVIQWRYQGKAVVAELEGVTTRERAQMLTNCEIGILPEQMNDLPEDEFYWRDLIGCEVINTNGYNMGVVDQIVETGSNDVLLVKANAKDSFGKVERMLPFVPGQFILKVDVQGKQILVDWDPDF.

A PRC barrel domain is found at 97 to 176 (EDEFYWRDLI…QILVDWDPDF (80 aa)).

The protein belongs to the RimM family. In terms of assembly, binds ribosomal protein uS19.

The protein localises to the cytoplasm. In terms of biological role, an accessory protein needed during the final step in the assembly of 30S ribosomal subunit, possibly for assembly of the head region. Essential for efficient processing of 16S rRNA. May be needed both before and after RbfA during the maturation of 16S rRNA. It has affinity for free ribosomal 30S subunits but not for 70S ribosomes. The sequence is that of Ribosome maturation factor RimM from Shewanella sp. (strain ANA-3).